Consider the following 486-residue polypeptide: Glucose-6-phosphate 1-dehydrogenase (486 aa).

Residues 13 to 20 (GGTGDLAK), R47, 86 to 87 (DV), and K149 contribute to the NADP(+) site. 4 residues coordinate substrate: H179, K183, E217, and D236. The active-site Proton acceptor is H241. The substrate site is built by K339 and K344.

The protein belongs to the glucose-6-phosphate dehydrogenase family. As to quaternary structure, homodimer.

It carries out the reaction D-glucose 6-phosphate + NAD(+) = 6-phospho-D-glucono-1,5-lactone + NADH + H(+). It catalyses the reaction D-glucose 6-phosphate + NADP(+) = 6-phospho-D-glucono-1,5-lactone + NADPH + H(+). The protein operates within carbohydrate degradation; pentose phosphate pathway; D-ribulose 5-phosphate from D-glucose 6-phosphate (oxidative stage): step 1/3. Catalyzes the oxidation of glucose 6-phosphate to 6-phosphogluconolactone. Can utilize either NADP(+) or NAD(+). The protein is Glucose-6-phosphate 1-dehydrogenase of Leuconostoc mesenteroides.